We begin with the raw amino-acid sequence, 77 residues long: MEVKVFRVSGYFEKDGRKFKFTKEYRALKEEHVKELVYSDIGSRHKVKRRKIFIKEIREIKPEEAEDIVVRRLSLEL.

It belongs to the eukaryotic ribosomal protein eL20 family. In terms of assembly, part of the 50S ribosomal subunit. Binds 23S rRNA.

This Pyrococcus horikoshii (strain ATCC 700860 / DSM 12428 / JCM 9974 / NBRC 100139 / OT-3) protein is Large ribosomal subunit protein eL20.